A 425-amino-acid chain; its full sequence is Enolase (425 aa).

(2R)-2-phosphoglycerate is bound at residue glutamine 162. Glutamate 204 (proton donor) is an active-site residue. Residues aspartate 241, glutamate 282, and aspartate 309 each contribute to the Mg(2+) site. 4 residues coordinate (2R)-2-phosphoglycerate: lysine 334, arginine 363, serine 364, and lysine 385. The active-site Proton acceptor is the lysine 334.

The protein belongs to the enolase family. Mg(2+) serves as cofactor.

The protein resides in the cytoplasm. It localises to the secreted. Its subcellular location is the cell surface. The catalysed reaction is (2R)-2-phosphoglycerate = phosphoenolpyruvate + H2O. It participates in carbohydrate degradation; glycolysis; pyruvate from D-glyceraldehyde 3-phosphate: step 4/5. Catalyzes the reversible conversion of 2-phosphoglycerate (2-PG) into phosphoenolpyruvate (PEP). It is essential for the degradation of carbohydrates via glycolysis. This Corynebacterium aurimucosum (strain ATCC 700975 / DSM 44827 / CIP 107346 / CN-1) (Corynebacterium nigricans) protein is Enolase.